The following is a 58-amino-acid chain: Small ribosomal subunit protein bS21 (58 aa).

Residues 36–58 (EFYEKPSVKRKRKSEAARKRKKF) form a disordered region. The segment covering 43–58 (VKRKRKSEAARKRKKF) has biased composition (basic residues).

It belongs to the bacterial ribosomal protein bS21 family.

This is Small ribosomal subunit protein bS21 from Streptococcus uberis (strain ATCC BAA-854 / 0140J).